We begin with the raw amino-acid sequence, 636 residues long: 1-deoxy-D-xylulose-5-phosphate synthase (636 aa).

Thiamine diphosphate contacts are provided by residues H75 and A116–S118. Residue D147 coordinates Mg(2+). Thiamine diphosphate is bound by residues G148–A149, N177, Y288, and E370. Position 177 (N177) interacts with Mg(2+).

This sequence belongs to the transketolase family. DXPS subfamily. As to quaternary structure, homodimer. It depends on Mg(2+) as a cofactor. Requires thiamine diphosphate as cofactor.

It catalyses the reaction D-glyceraldehyde 3-phosphate + pyruvate + H(+) = 1-deoxy-D-xylulose 5-phosphate + CO2. Its pathway is metabolic intermediate biosynthesis; 1-deoxy-D-xylulose 5-phosphate biosynthesis; 1-deoxy-D-xylulose 5-phosphate from D-glyceraldehyde 3-phosphate and pyruvate: step 1/1. Functionally, catalyzes the acyloin condensation reaction between C atoms 2 and 3 of pyruvate and glyceraldehyde 3-phosphate to yield 1-deoxy-D-xylulose-5-phosphate (DXP). The protein is 1-deoxy-D-xylulose-5-phosphate synthase of Ralstonia nicotianae (strain ATCC BAA-1114 / GMI1000) (Ralstonia solanacearum).